The following is a 481-amino-acid chain: uncharacterized protein (481 aa).

The next 10 membrane-spanning stretches (helical) occupy residues 30-50 (TIII…FVQF), 96-116 (AIAL…FIGM), 154-174 (CMAV…FNSV), 196-216 (ISLV…IAII), 220-240 (LVPM…GMHI), 250-270 (IVQS…ALVS), 311-331 (MLGV…IILL), 354-374 (IGEF…YSSI), 391-411 (KPWL…FGAV), and 424-444 (VMAV…PIVW).

It belongs to the alanine or glycine:cation symporter (AGCS) (TC 2.A.25) family.

It localises to the cell inner membrane. This is an uncharacterized protein from Haemophilus influenzae (strain ATCC 51907 / DSM 11121 / KW20 / Rd).